The chain runs to 257 residues: Phosphonates import ATP-binding protein PhnC (257 aa).

Positions 2–246 (IEFRNVSKVY…KFAEIYGDVA (245 aa)) constitute an ABC transporter domain. Residue 35-42 (GLSGAGKS) participates in ATP binding.

This sequence belongs to the ABC transporter superfamily. Phosphonates importer (TC 3.A.1.9.1) family. As to quaternary structure, the complex is composed of two ATP-binding proteins (PhnC), two transmembrane proteins (PhnE) and a solute-binding protein (PhnD).

The protein resides in the cell membrane. The enzyme catalyses phosphonate(out) + ATP + H2O = phosphonate(in) + ADP + phosphate + H(+). Functionally, part of the ABC transporter complex PhnCDE involved in phosphonates import. Responsible for energy coupling to the transport system. The protein is Phosphonates import ATP-binding protein PhnC of Bacillus cereus (strain ATCC 10987 / NRS 248).